Consider the following 299-residue polypeptide: Tyrosine recombinase XerC (299 aa).

One can recognise a Core-binding (CB) domain in the interval M1–N85. The 180-residue stretch at R106–D285 folds into the Tyr recombinase domain. Residues R146, K170, H237, R240, and H263 contribute to the active site. Y272 (O-(3'-phospho-DNA)-tyrosine intermediate) is an active-site residue.

This sequence belongs to the 'phage' integrase family. XerC subfamily. As to quaternary structure, forms a cyclic heterotetrameric complex composed of two molecules of XerC and two molecules of XerD.

Its subcellular location is the cytoplasm. Site-specific tyrosine recombinase, which acts by catalyzing the cutting and rejoining of the recombining DNA molecules. The XerC-XerD complex is essential to convert dimers of the bacterial chromosome into monomers to permit their segregation at cell division. It also contributes to the segregational stability of plasmids. In Pseudomonas savastanoi pv. phaseolicola (strain 1448A / Race 6) (Pseudomonas syringae pv. phaseolicola (strain 1448A / Race 6)), this protein is Tyrosine recombinase XerC.